Here is a 430-residue protein sequence, read N- to C-terminus: MSIIIKVHARQILDSRGNPTIEVDVVTENGVLGRAAVPSGASTGEHEAVELRDGGKAYLGKGVLNAVNNVNTVIAEELVGTSVFEQNTIDQLMIDLDGTPNKSKLGANAILGVSLAAAKAAANELGLPLYRYVGGVSANTLPVPMMNIINGGSHSDAPIAFQEFMIFPVKATSFTHAMQMGTEIFHSLKKVLHDRGLSTAVGDEGGFAPNLAGGTEDALDTIKLAVEKAGYTFGDEIMIALDCAASEFYVDGKYDYTKFEGETGKIRTSAEQADYLAELAAKYPIISIEDGMYEDDWDGWKALTEKIGNKVQLVGDDLFVTNVARLSTGIEKGIANSILVKVNQIGTLTETIAAVNMAKNAGYTSVMSHRSGETEDNTIADLAVALNCGQIKTGSASRSDRMAKYNQLLRIEEELGSTAYFPGLNAFKIK.

Gln162 contributes to the (2R)-2-phosphoglycerate binding site. Glu204 acts as the Proton donor in catalysis. Mg(2+) contacts are provided by Asp242, Glu289, and Asp316. Positions 341, 370, 371, and 392 each coordinate (2R)-2-phosphoglycerate. Lys341 functions as the Proton acceptor in the catalytic mechanism.

It belongs to the enolase family. Mg(2+) serves as cofactor.

It is found in the cytoplasm. It localises to the secreted. Its subcellular location is the cell surface. It carries out the reaction (2R)-2-phosphoglycerate = phosphoenolpyruvate + H2O. Its pathway is carbohydrate degradation; glycolysis; pyruvate from D-glyceraldehyde 3-phosphate: step 4/5. Functionally, catalyzes the reversible conversion of 2-phosphoglycerate (2-PG) into phosphoenolpyruvate (PEP). It is essential for the degradation of carbohydrates via glycolysis. The protein is Enolase of Flavobacterium johnsoniae (strain ATCC 17061 / DSM 2064 / JCM 8514 / BCRC 14874 / CCUG 350202 / NBRC 14942 / NCIMB 11054 / UW101) (Cytophaga johnsonae).